A 131-amino-acid polypeptide reads, in one-letter code: Photosystem II reaction center Psb28 protein (131 aa).

The interval 110 to 131 is disordered; that stretch reads NGLGYSQNQKSDQTDAATEEQA. A compositionally biased stretch (polar residues) spans 112–125; sequence LGYSQNQKSDQTDA.

The protein belongs to the Psb28 family. Part of the photosystem II complex.

It localises to the cellular thylakoid membrane. The sequence is that of Photosystem II reaction center Psb28 protein from Synechococcus sp. (strain CC9902).